Reading from the N-terminus, the 509-residue chain is MQSWSRVYCSLAKRGHFNRISHGLQGVSSVPLRTYADQPIDADVTVIGSGPGGYVAAIKAAQLGFKTVCIEKNDTLGGTCLNVGCIPSKALLNNSHYYHLAHGRDFASRGIELSEVRLNLEKMMEQKSSAVKALIGGIAHLFKQNKVVHVNGFGKITGKNQVTATKADGSSQVIGTKNILIATGSEVTPFPGITIDEDTIVSSTGALSLKKVPEKLVVIGAGVIGVELGSVWQRLGADVTAVEFLGHVGGIGIDMEISKNFQRILQKQGFKFKLNTKVTGATKRSDGKIDVSVEAASGGKAEVITCDVLLVCIGRRPFTQNLGLEELGIELDPRGRIPVNTRFQTKIPNIYAIGDVVAGPMLAHKAEDEGIICVEGMAGGAVHIDYNCVPSVIYTHPEVAWVGKSEEQLKEEGIEYKVGKFPFAANSRAKTNADTDGMVKILGQKSTDRVLGAHILGPGAGEMVNEAALALEYGASCEDIARVCHAHPTLSEAFREANLAASFGKPINF.

The N-terminal 35 residues, 1–35, are a transit peptide targeting the mitochondrion; the sequence is MQSWSRVYCSLAKRGHFNRISHGLQGVSSVPLRTY. Lysine 66 is modified (N6-acetyllysine; alternate). Lysine 66 carries the post-translational modification N6-succinyllysine; alternate. FAD is bound by residues 71–80 and lysine 89; that span reads EKNDTLGGTC. The cysteines at positions 80 and 85 are disulfide-linked. 3 positions are modified to N6-acetyllysine; alternate: lysine 122, lysine 132, and lysine 143. An N6-succinyllysine; alternate mark is found at lysine 122, lysine 132, and lysine 143. Position 154 (glycine 154) interacts with FAD. N6-succinyllysine is present on residues lysine 159 and lysine 166. 183–185 contacts FAD; it reads TGS. NAD(+) contacts are provided by residues 220–227 and glutamate 243; that span reads GAGVIGVE. 2 positions are modified to N6-succinyllysine: lysine 273 and lysine 277. Residue valine 278 coordinates NAD(+). Serine 285 and serine 297 each carry phosphoserine. Glycine 314 contributes to the NAD(+) binding site. Lysine 346 bears the N6-acetyllysine mark. FAD is bound by residues aspartate 355 and 361-364; that span reads MLAH. Position 410 is an N6-acetyllysine; alternate (lysine 410). The residue at position 410 (lysine 410) is an N6-succinyllysine; alternate. N6-acetyllysine occurs at positions 417 and 420. At lysine 430 the chain carries N6-succinyllysine. Histidine 487 (proton acceptor) is an active-site residue. Position 502 is a phosphoserine (serine 502). At lysine 505 the chain carries N6-acetyllysine; alternate. At lysine 505 the chain carries N6-succinyllysine; alternate.

This sequence belongs to the class-I pyridine nucleotide-disulfide oxidoreductase family. Homodimer. Part of the multimeric pyruvate dehydrogenase complex that contains multiple copies of pyruvate dehydrogenase (subunits PDHA (PDHA1 or PDHA2) and PDHB, E1), dihydrolipoamide acetyltransferase (DLAT, E2) and lipoamide dehydrogenase (DLD, E3). These subunits are bound to an inner core composed of about 48 DLAT and 12 PDHX molecules (by non covalent bonds). The 2-oxoglutarate dehydrogenase complex is composed of OGDH (2-oxoglutarate dehydrogenase; E1), DLST (dihydrolipoamide succinyltransferase; E2), DLD (dihydrolipoamide dehydrogenase; E3) and the assembly factor KGD4. It contains multiple copies of the three enzymatic components (E1, E2 and E3). In the nucleus, the 2-oxoglutarate dehydrogenase complex associates with KAT2A. Interacts with PDHX. FAD is required as a cofactor. Tyrosine phosphorylated.

Its subcellular location is the mitochondrion matrix. It is found in the nucleus. The protein localises to the cell projection. The protein resides in the cilium. It localises to the flagellum. Its subcellular location is the cytoplasmic vesicle. It is found in the secretory vesicle. The protein localises to the acrosome. It catalyses the reaction N(6)-[(R)-dihydrolipoyl]-L-lysyl-[protein] + NAD(+) = N(6)-[(R)-lipoyl]-L-lysyl-[protein] + NADH + H(+). Its function is as follows. Lipoamide dehydrogenase is a component of the glycine cleavage system as well as an E3 component of three alpha-ketoacid dehydrogenase complexes (pyruvate-, alpha-ketoglutarate-, and branched-chain amino acid-dehydrogenase complex). The 2-oxoglutarate dehydrogenase complex is mainly active in the mitochondrion. A fraction of the 2-oxoglutarate dehydrogenase complex also localizes in the nucleus and is required for lysine succinylation of histones: associates with KAT2A on chromatin and provides succinyl-CoA to histone succinyltransferase KAT2A. In monomeric form may have additional moonlighting function as serine protease. Involved in the hyperactivation of spermatazoa during capacitation and in the spermatazoal acrosome reaction. The sequence is that of Dihydrolipoyl dehydrogenase, mitochondrial (DLD) from Cricetulus griseus (Chinese hamster).